The following is a 287-amino-acid chain: Movement protein BC1 (287 aa).

The protein belongs to the begomovirus movement protein BC1 family. As to quaternary structure, binds to dimeric supercoiled plasmid DNA. Phosphorylated.

Its subcellular location is the host cell membrane. The protein resides in the host microsome membrane. The protein localises to the host endoplasmic reticulum membrane. Its function is as follows. Transports viral genome to neighboring plant cells directly through plasmosdesmata, without any budding. The movement protein allows efficient cell to cell propagation, by bypassing the host cell wall barrier. Begomovirus genome is shuttled out of nucleus by Nuclear shuttle protein (NSP) and the movement protein transports the DNA-NSP complex to cell plasmodesmata and facilitates further movement across the cell wall. This is Movement protein BC1 from Manihot esculenta (Cassava).